A 176-amino-acid chain; its full sequence is Small ribosomal subunit protein uS5 (176 aa).

One can recognise an S5 DRBM domain in the interval 11 to 74; that stretch reads LSEVLVDVNR…QAAKKRMMKV (64 aa).

The protein belongs to the universal ribosomal protein uS5 family. Part of the 30S ribosomal subunit. Contacts proteins S4 and S8.

Functionally, with S4 and S12 plays an important role in translational accuracy. In terms of biological role, located at the back of the 30S subunit body where it stabilizes the conformation of the head with respect to the body. This chain is Small ribosomal subunit protein uS5, found in Rickettsia peacockii (strain Rustic).